The sequence spans 717 residues: MKFGKRHYRPQVDQMDCGVASLAMVFGYYGSYYFLAHLRELAKTTMDGTTALGLVKVAEEIGFETRAIKADMTLFDLPDLTFPFVAHVLKEGKLLHYYVVTGQDKDSIHIADPDPGVKLTKLPRERFEEEWTGVTLFMAPSPDYKPHKEQKNGLLSFIPILVKQRGLIANIVLATLLVTVINIVGSYYLQSIIDTYVPDQMRSTLGIISIGLVIVYIFQQILSYAQEYLLLVLGQRLSIDVILSYIKHVFHLPMSFFATRRTGEIVSRFTDANSIIDALASTILSIFLDVSTVVIISLVLFSQNTNLFFMTLLALPIYTVIIFAFMKPFEKMNRDTMEANAVLSSSIIEDINGIETIKSLTSESQRYQKIDKEFVDYLKKSFTYSRAESQQKALKKVAHLLLNVGILWMGAVLVMDGKMSLGQLITYNTLLVYFTNPLENIINLQTKLQTAQVANNRLNEVYLVASEFEEKKTVEDLSLMKGDMTFKQVHYKYGYGRDVLSDINLTVPQGSKVAFVGISGSGKTTLAKMMVNFYDPSQGEISLGSVNLNQIDKKALRQYINYLSQQPYVFNGTILENLLLGAKEGTTQEDILRAVELAEIREDIERMPLNYQTELTSDGAGISGGQRQRIALARALLTDAPVLILDEATSSLDILTEKRIVDNLIALDKTLIFIAHRLTIAERTEKVVVLDQGKIVEEGKHADLLAQGGFYAHLVNS.

The region spanning 11-138 (QVDQMDCGVA…EEWTGVTLFM (128 aa)) is the Peptidase C39 domain. Cys-17 is a catalytic residue. 6 helical membrane passes run 166–186 (GLIANIVLATLLVTVINIVGS), 205–225 (LGIISIGLVIVYIFQQILSYA), 237–257 (LSIDVILSYIKHVFHLPMSFF), 282–302 (TILSIFLDVSTVVIISLVLFS), 306–326 (NLFFMTLLALPIYTVIIFAFM), and 397–417 (VAHLLLNVGILWMGAVLVMDG). The ABC transmembrane type-1 domain occupies 168 to 450 (IANIVLATLL…IINLQTKLQT (283 aa)). The ABC transporter domain occupies 484 to 717 (MTFKQVHYKY…GGFYAHLVNS (234 aa)). 517–524 (GISGSGKT) serves as a coordination point for ATP.

This sequence belongs to the ABC transporter superfamily. Competence factor exporter (TC 3.A.1.112.1) family.

The protein localises to the cell membrane. Its function is as follows. Required for induction of competence. Seems to transport the competence-stimulating peptide (CSP). In Streptococcus pneumoniae serotype 4 (strain ATCC BAA-334 / TIGR4), this protein is Transport/processing ATP-binding protein ComA (comA).